Here is a 351-residue protein sequence, read N- to C-terminus: Photosystem II D2 protein (351 aa).

A helical membrane pass occupies residues 39–59 (TAYLAIGGWLTGTTFVTSWYT). Residue histidine 116 coordinates chlorophyll a. The helical transmembrane segment at 123 to 139 (GFMLRQFEIARLVGIRP) threads the bilayer. Pheophytin a-binding residues include glutamine 128 and asparagine 141. Residues 151–164 (VFVSVFLMYPLGQS) traverse the membrane as a helical segment. A chlorophyll a-binding site is contributed by histidine 196. Residues 206-226 (GALLCAIHGATVENTLFEDGE) form a helical membrane-spanning segment. The a plastoquinone site is built by histidine 213 and phenylalanine 260. Histidine 213 contributes to the Fe cation binding site. Histidine 267 provides a ligand contact to Fe cation. The helical transmembrane segment at 277–293 (GLWTSSIGIIGLALNLR) threads the bilayer.

The protein belongs to the reaction center PufL/M/PsbA/D family. As to quaternary structure, PSII is composed of 1 copy each of membrane proteins PsbA, PsbB, PsbC, PsbD, PsbE, PsbF, PsbH, PsbI, PsbJ, PsbK, PsbL, PsbM, PsbT, PsbX, PsbY, PsbZ, Psb30/Ycf12, peripheral proteins PsbO, CyanoQ (PsbQ), PsbU, PsbV and a large number of cofactors. It forms dimeric complexes. Requires The D1/D2 heterodimer binds P680, chlorophylls that are the primary electron donor of PSII, and subsequent electron acceptors. It shares a non-heme iron and each subunit binds pheophytin, quinone, additional chlorophylls, carotenoids and lipids. There is also a Cl(-1) ion associated with D1 and D2, which is required for oxygen evolution. The PSII complex binds additional chlorophylls, carotenoids and specific lipids. as cofactor.

The protein localises to the cellular thylakoid membrane. It carries out the reaction 2 a plastoquinone + 4 hnu + 2 H2O = 2 a plastoquinol + O2. Functionally, photosystem II (PSII) is a light-driven water:plastoquinone oxidoreductase that uses light energy to abstract electrons from H(2)O, generating O(2) and a proton gradient subsequently used for ATP formation. It consists of a core antenna complex that captures photons, and an electron transfer chain that converts photonic excitation into a charge separation. The D1/D2 (PsbA/PsbD) reaction center heterodimer binds P680, the primary electron donor of PSII as well as several subsequent electron acceptors. D2 is needed for assembly of a stable PSII complex. The polypeptide is Photosystem II D2 protein (Synechococcus sp. (strain WH7803)).